Here is a 270-residue protein sequence, read N- to C-terminus: Zinc transporter ZupT (270 aa).

8 helical membrane passes run I8–I28, L40–L60, W78–V98, I131–A151, I162–Y182, L192–F212, F216–I236, and H250–I270. Residues N141 and E144 each coordinate Fe(2+). Residues E144 and H169 each contribute to the Zn(2+) site. Fe(2+) is bound by residues N170, E173, and E202. A Zn(2+)-binding site is contributed by E173.

This sequence belongs to the ZIP transporter (TC 2.A.5) family. ZupT subfamily.

It is found in the cell membrane. It catalyses the reaction Zn(2+)(in) = Zn(2+)(out). Functionally, mediates zinc uptake. May also transport other divalent cations. This is Zinc transporter ZupT from Akkermansia muciniphila (strain ATCC BAA-835 / DSM 22959 / JCM 33894 / BCRC 81048 / CCUG 64013 / CIP 107961 / Muc).